The chain runs to 180 residues: Major urinary protein 6 (180 aa).

Positions 1–18 (MKMLLLLCLGLTLVCVHA) are cleaved as a signal peptide. A disulfide bridge links Cys82 with Cys175.

Belongs to the calycin superfamily. Lipocalin family. Abundant in the urine of adult male mice but absent from that of females.

It is found in the secreted. Binds pheromones that are released from drying urine of males. These pheromones affect the sexual behavior of females. The chain is Major urinary protein 6 (Mup6) from Mus musculus (Mouse).